A 237-amino-acid chain; its full sequence is MPNQIRAQLLELNKNTKSNNVKQQLEIIENINSNDSIELKDLADLFFERITGPNYKSNCVDGLIYEKLLNSKNQEIVKFASNLCPDGIVPLRSAQQMNYKDLQMLLTHRDLLKADQLTQQKLIQLAGVNAQTRNWLYFTDIKKIPAQDLQTIDKLWHTHSKGKFGLFVQRQIWLSVGKDWGKFWQKIGWEVDRIPCRYPEEFQWNSHGPRGHLPLFNQLRGVQVLSALFTHKAWENY.

The protein belongs to the ycf53 family.

The protein resides in the plastid. Its subcellular location is the chloroplast. This is an uncharacterized protein from Pyropia yezoensis (Susabi-nori).